We begin with the raw amino-acid sequence, 32 residues long: GCQKFFWTCHPGQPPCCSGLACTWPTEICIDG.

Cystine bridges form between Cys2–Cys17, Cys9–Cys22, and Cys16–Cys29. Residue Asp31 is modified to Aspartic acid 1-amide.

The protein belongs to the neurotoxin 10 (Hwtx-1) family. 30 (Jztx-14) subfamily. Amidated as well as non-amidated forms are found in the venom. In terms of tissue distribution, expressed by the venom gland.

The protein localises to the secreted. Functionally, probable ion channel inhibitor. In Chilobrachys guangxiensis (Chinese earth tiger tarantula), this protein is Jingzhaotoxin F4-32.60.